The sequence spans 313 residues: Serine/threonine-protein phosphatase PP2A-4 catalytic subunit (313 aa).

4 residues coordinate Mn(2+): D61, H63, D89, and N121. H122 functions as the Proton donor in the catalytic mechanism. Mn(2+) contacts are provided by H171 and H245. At L313 the chain carries Leucine methyl ester.

The protein belongs to the PPP phosphatase family. PP-2A subfamily. As to quaternary structure, PP2A consists of a common heterodimeric core enzyme, composed of a 36 kDa catalytic subunit (subunit C) and a 65 kDa constant regulatory subunit (subunit A), that associates with a variety of regulatory subunits such as subunits B (the R2/B/PR55/B55, R3/B''/PR72/PR130/PR59 and R5/B'/B56 families). Interacts with SIC/RON3. The cofactor is Mn(2+). In terms of processing, reversibly methyl esterified on Leu-313 by leucine carboxyl methyltransferase 1 (LCMT1) and pectin methylesterase 1 (PME1). Carboxyl methylation influences the affinity of the catalytic subunit for the different regulatory subunits, thereby modulating the PP2A holoenzyme's substrate specificity, enzyme activity and cellular localization. Post-translationally, phosphorylation of either threonine (by autophosphorylation-activated protein kinase) or tyrosine results in inactivation of the phosphatase. Auto-dephosphorylation has been suggested as a mechanism for reactivation.

It is found in the cytoplasm. It catalyses the reaction O-phospho-L-seryl-[protein] + H2O = L-seryl-[protein] + phosphate. The enzyme catalyses O-phospho-L-threonyl-[protein] + H2O = L-threonyl-[protein] + phosphate. Functionally, functions redundantly with PP2A3, and is involved in establishing auxin gradients, apical-basal axis of polarity and root and shoot apical meristem during embryogenesis. May dephosphorylate PIN1 and regulate its subcellular distribution for polar auxin transport. The holoenzyme composed of PP2AA1, PP2A4 and B'ZETA or B'ETA acts as a negative regulator of plant innate immunity by controlling BAK1 phosphorylation state and activation in surface-localized immune receptor complexes. The chain is Serine/threonine-protein phosphatase PP2A-4 catalytic subunit from Arabidopsis thaliana (Mouse-ear cress).